The primary structure comprises 1102 residues: Carbamoyl phosphate synthase large chain (1102 aa).

The carboxyphosphate synthetic domain stretch occupies residues 1-408; it reads MPKRTDIQSV…AFQKALRSLE (408 aa). Residues Arg129, Arg175, Gly181, Gly182, Glu214, Ile216, Glu221, Gly247, Val248, His249, Gln291, and Glu305 each contribute to the ATP site. The 198-residue stretch at 137-334 folds into the ATP-grasp 1 domain; the sequence is EEVRKKIGHG…IAKIAAKLAV (198 aa). Mg(2+)-binding residues include Gln291, Glu305, and Asn307. Residues Gln291, Glu305, and Asn307 each contribute to the Mn(2+) site. The tract at residues 409 to 551 is oligomerization domain; sequence KKGSQFTFVG…YFYSSYDEES (143 aa). Residues 552-954 form a carbamoyl phosphate synthetic domain region; the sequence is EVAPREKPAV…AYAKSQAGAY (403 aa). In terms of domain architecture, ATP-grasp 2 spans 682-873; sequence GRVLAEAGLP…LAKAAARISL (192 aa). Arg718, Arg757, Leu759, Glu764, Gly789, Ile790, His791, Ser792, Gln832, and Glu844 together coordinate ATP. 3 residues coordinate Mg(2+): Gln832, Glu844, and Asn846. Mn(2+) contacts are provided by Gln832, Glu844, and Asn846. An MGS-like domain is found at 955–1100; that stretch reads GPLPTKGRAF…QEHAAFLIAA (146 aa). The allosteric domain stretch occupies residues 955–1102; sequence GPLPTKGRAF…HAAFLIAARD (148 aa).

Belongs to the CarB family. Composed of two chains; the small (or glutamine) chain promotes the hydrolysis of glutamine to ammonia, which is used by the large (or ammonia) chain to synthesize carbamoyl phosphate. Tetramer of heterodimers (alpha,beta)4. Mg(2+) serves as cofactor. It depends on Mn(2+) as a cofactor.

The catalysed reaction is hydrogencarbonate + L-glutamine + 2 ATP + H2O = carbamoyl phosphate + L-glutamate + 2 ADP + phosphate + 2 H(+). It carries out the reaction hydrogencarbonate + NH4(+) + 2 ATP = carbamoyl phosphate + 2 ADP + phosphate + 2 H(+). Its pathway is amino-acid biosynthesis; L-arginine biosynthesis; carbamoyl phosphate from bicarbonate: step 1/1. It participates in pyrimidine metabolism; UMP biosynthesis via de novo pathway; (S)-dihydroorotate from bicarbonate: step 1/3. Functionally, large subunit of the glutamine-dependent carbamoyl phosphate synthetase (CPSase). CPSase catalyzes the formation of carbamoyl phosphate from the ammonia moiety of glutamine, carbonate, and phosphate donated by ATP, constituting the first step of 2 biosynthetic pathways, one leading to arginine and/or urea and the other to pyrimidine nucleotides. The large subunit (synthetase) binds the substrates ammonia (free or transferred from glutamine from the small subunit), hydrogencarbonate and ATP and carries out an ATP-coupled ligase reaction, activating hydrogencarbonate by forming carboxy phosphate which reacts with ammonia to form carbamoyl phosphate. The protein is Carbamoyl phosphate synthase large chain of Streptomyces coelicolor (strain ATCC BAA-471 / A3(2) / M145).